A 490-amino-acid polypeptide reads, in one-letter code: Protein nucleotidyltransferase YdiU (490 aa).

Glycine 94, glycine 96, arginine 97, lysine 117, aspartate 129, glycine 130, arginine 180, and arginine 187 together coordinate ATP. Residue aspartate 256 is the Proton acceptor of the active site. Positions 257 and 266 each coordinate Mg(2+). Aspartate 266 contacts ATP.

The protein belongs to the SELO family. Mg(2+) is required as a cofactor. It depends on Mn(2+) as a cofactor.

The enzyme catalyses L-seryl-[protein] + ATP = 3-O-(5'-adenylyl)-L-seryl-[protein] + diphosphate. The catalysed reaction is L-threonyl-[protein] + ATP = 3-O-(5'-adenylyl)-L-threonyl-[protein] + diphosphate. It carries out the reaction L-tyrosyl-[protein] + ATP = O-(5'-adenylyl)-L-tyrosyl-[protein] + diphosphate. It catalyses the reaction L-histidyl-[protein] + UTP = N(tele)-(5'-uridylyl)-L-histidyl-[protein] + diphosphate. The enzyme catalyses L-seryl-[protein] + UTP = O-(5'-uridylyl)-L-seryl-[protein] + diphosphate. The catalysed reaction is L-tyrosyl-[protein] + UTP = O-(5'-uridylyl)-L-tyrosyl-[protein] + diphosphate. In terms of biological role, nucleotidyltransferase involved in the post-translational modification of proteins. It can catalyze the addition of adenosine monophosphate (AMP) or uridine monophosphate (UMP) to a protein, resulting in modifications known as AMPylation and UMPylation. This is Protein nucleotidyltransferase YdiU from Clostridium perfringens (strain ATCC 13124 / DSM 756 / JCM 1290 / NCIMB 6125 / NCTC 8237 / Type A).